The following is a 357-amino-acid chain: tRNA-specific 2-thiouridylase MnmA (357 aa).

ATP is bound by residues Gly10–Ser17 and Ile36. The active-site Nucleophile is the Cys98. Cys98 and Cys194 are disulfide-bonded. An ATP-binding site is contributed by Gly122. The interval Lys144–Gln146 is interaction with tRNA. The active-site Cysteine persulfide intermediate is Cys194. The segment at Arg303–Tyr304 is interaction with tRNA.

The protein belongs to the MnmA/TRMU family.

The protein resides in the cytoplasm. The enzyme catalyses S-sulfanyl-L-cysteinyl-[protein] + uridine(34) in tRNA + AH2 + ATP = 2-thiouridine(34) in tRNA + L-cysteinyl-[protein] + A + AMP + diphosphate + H(+). In terms of biological role, catalyzes the 2-thiolation of uridine at the wobble position (U34) of tRNA, leading to the formation of s(2)U34. In Chlorobium phaeovibrioides (strain DSM 265 / 1930) (Prosthecochloris vibrioformis (strain DSM 265)), this protein is tRNA-specific 2-thiouridylase MnmA.